A 515-amino-acid chain; its full sequence is Maturase K (515 aa).

This sequence belongs to the intron maturase 2 family. MatK subfamily.

The protein localises to the plastid. The protein resides in the chloroplast. In terms of biological role, usually encoded in the trnK tRNA gene intron. Probably assists in splicing its own and other chloroplast group II introns. The polypeptide is Maturase K (Picea sitchensis (Sitka spruce)).